Here is a 422-residue protein sequence, read N- to C-terminus: Adenylosuccinate synthetase (422 aa).

GTP is bound by residues 12–18 (GDEGKGK) and 40–42 (GHT). The active-site Proton acceptor is D13. Residues D13 and G40 each coordinate Mg(2+). IMP-binding positions include 13-16 (DEGK), 38-41 (NAGH), T129, R143, N221, T236, and R300. The Proton donor role is filled by H41. Position 296–302 (296–302 (VTTGRKR)) interacts with substrate. GTP-binding positions include R302, 328–330 (KLD), and 410–412 (GVG).

This sequence belongs to the adenylosuccinate synthetase family. In terms of assembly, homodimer. Requires Mg(2+) as cofactor.

It is found in the cytoplasm. It carries out the reaction IMP + L-aspartate + GTP = N(6)-(1,2-dicarboxyethyl)-AMP + GDP + phosphate + 2 H(+). The protein operates within purine metabolism; AMP biosynthesis via de novo pathway; AMP from IMP: step 1/2. Plays an important role in the de novo pathway and in the salvage pathway of purine nucleotide biosynthesis. Catalyzes the first committed step in the biosynthesis of AMP from IMP. This is Adenylosuccinate synthetase from Pyrenophora tritici-repentis (strain Pt-1C-BFP) (Wheat tan spot fungus).